A 157-amino-acid chain; its full sequence is Ribosomal RNA large subunit methyltransferase H (157 aa).

S-adenosyl-L-methionine is bound by residues G106 and 125 to 130; that span reads LSEMTF.

The protein belongs to the RNA methyltransferase RlmH family. As to quaternary structure, homodimer.

The protein resides in the cytoplasm. The catalysed reaction is pseudouridine(1915) in 23S rRNA + S-adenosyl-L-methionine = N(3)-methylpseudouridine(1915) in 23S rRNA + S-adenosyl-L-homocysteine + H(+). In terms of biological role, specifically methylates the pseudouridine at position 1915 (m3Psi1915) in 23S rRNA. This is Ribosomal RNA large subunit methyltransferase H from Syntrophobacter fumaroxidans (strain DSM 10017 / MPOB).